We begin with the raw amino-acid sequence, 305 residues long: Glycine--tRNA ligase alpha subunit (305 aa).

It belongs to the class-II aminoacyl-tRNA synthetase family. As to quaternary structure, tetramer of two alpha and two beta subunits.

It localises to the cytoplasm. The catalysed reaction is tRNA(Gly) + glycine + ATP = glycyl-tRNA(Gly) + AMP + diphosphate. The chain is Glycine--tRNA ligase alpha subunit from Heliobacterium modesticaldum (strain ATCC 51547 / Ice1).